A 114-amino-acid polypeptide reads, in one-letter code: Macrophage migration inhibitory factor homolog (114 aa).

The active-site Proton acceptor; via imino nitrogen is Pro-2. 2 residues coordinate substrate: Lys-33 and Asn-98.

The protein belongs to the MIF family.

Its subcellular location is the secreted. It carries out the reaction L-dopachrome = 5,6-dihydroxyindole-2-carboxylate. The enzyme catalyses 3-phenylpyruvate = enol-phenylpyruvate. Tautomerization of the methyl ester of L-dopachrome. Inhibits migration of human peripheral blood mononuclear cells. The sequence is that of Macrophage migration inhibitory factor homolog from Trichuris trichiura (Whipworm).